The primary structure comprises 91 residues: Mercuric transport protein periplasmic component (91 aa).

Residues 1 to 19 (MKKLFASLALAAFVAPVFA) form the signal peptide. Positions 22–88 (QTVTLSVPGM…ATEDAGYPSS (67 aa)) constitute an HMA domain. Hg(2+) is bound by residues cysteine 33 and cysteine 36.

This sequence belongs to the MerP family. In terms of assembly, monomer.

It localises to the periplasm. Its function is as follows. Involved in mercury resistance. Acts as a mercury scavenger that specifically binds to a mercuric ion in the periplasm and probably passes it to the cytoplasmic mercuric reductase MerA via the mercuric transport protein MerT. This Acinetobacter calcoaceticus protein is Mercuric transport protein periplasmic component.